Reading from the N-terminus, the 323-residue chain is Aspartate carbamoyltransferase catalytic subunit (323 aa).

Residues Arg-65 and Thr-66 each coordinate carbamoyl phosphate. Residue Lys-93 participates in L-aspartate binding. Carbamoyl phosphate is bound by residues Arg-115, His-149, and Gln-152. L-aspartate-binding residues include Arg-182 and Arg-237. The carbamoyl phosphate site is built by Gly-278 and Pro-279.

This sequence belongs to the aspartate/ornithine carbamoyltransferase superfamily. ATCase family. Heterododecamer (2C3:3R2) of six catalytic PyrB chains organized as two trimers (C3), and six regulatory PyrI chains organized as three dimers (R2).

It carries out the reaction carbamoyl phosphate + L-aspartate = N-carbamoyl-L-aspartate + phosphate + H(+). The protein operates within pyrimidine metabolism; UMP biosynthesis via de novo pathway; (S)-dihydroorotate from bicarbonate: step 2/3. In terms of biological role, catalyzes the condensation of carbamoyl phosphate and aspartate to form carbamoyl aspartate and inorganic phosphate, the committed step in the de novo pyrimidine nucleotide biosynthesis pathway. The polypeptide is Aspartate carbamoyltransferase catalytic subunit (Aromatoleum aromaticum (strain DSM 19018 / LMG 30748 / EbN1) (Azoarcus sp. (strain EbN1))).